The following is a 134-amino-acid chain: ATP synthase epsilon chain (134 aa).

The protein belongs to the ATPase epsilon chain family. As to quaternary structure, F-type ATPases have 2 components, CF(1) - the catalytic core - and CF(0) - the membrane proton channel. CF(1) has five subunits: alpha(3), beta(3), gamma(1), delta(1), epsilon(1). CF(0) has three main subunits: a, b and c.

The protein resides in the cellular thylakoid membrane. Produces ATP from ADP in the presence of a proton gradient across the membrane. This chain is ATP synthase epsilon chain, found in Prochlorococcus marinus (strain MIT 9215).